Here is a 237-residue protein sequence, read N- to C-terminus: Phosphoribosylaminoimidazole-succinocarboxamide synthase (237 aa).

It belongs to the SAICAR synthetase family.

The enzyme catalyses 5-amino-1-(5-phospho-D-ribosyl)imidazole-4-carboxylate + L-aspartate + ATP = (2S)-2-[5-amino-1-(5-phospho-beta-D-ribosyl)imidazole-4-carboxamido]succinate + ADP + phosphate + 2 H(+). The protein operates within purine metabolism; IMP biosynthesis via de novo pathway; 5-amino-1-(5-phospho-D-ribosyl)imidazole-4-carboxamide from 5-amino-1-(5-phospho-D-ribosyl)imidazole-4-carboxylate: step 1/2. The protein is Phosphoribosylaminoimidazole-succinocarboxamide synthase of Listeria innocua serovar 6a (strain ATCC BAA-680 / CLIP 11262).